The following is a 455-amino-acid chain: P2X purinoceptor 5 (455 aa).

Over 1–30 the chain is Cytoplasmic; sequence MGQAAWKGFVLSLFDYKTAKFVVAKSKKVG. A helical membrane pass occupies residues 31 to 50; it reads LLYRVLQLTILLYLLIWVFL. Over 51 to 339 the chain is Extracellular; the sequence is IKKSYQDIDT…KFSIIPTVIN (289 aa). 69–71 contributes to the ATP binding site; it reads KVK. A glycan (N-linked (GlcNAc...) asparagine) is linked at N77. 3 disulfide bridges follow: C118/C169, C129/C152, and C135/C163. N-linked (GlcNAc...) asparagine glycosylation occurs at N157. T189 contributes to the ATP binding site. N-linked (GlcNAc...) asparagine glycosylation is present at N202. Cystine bridges form between C220-C229 and C263-C272. Residues 294–296 and K314 contribute to the ATP site; that span reads NFR. Residues 340-362 form a helical membrane-spanning segment; sequence IGSGLALMGAGAFFCDLVLIYLI. Over 363 to 455 the chain is Cytoplasmic; the sequence is RKSEFYRDKK…PSQILQTVKT (93 aa).

The protein belongs to the P2X receptor family. As to quaternary structure, functional P2XRs are organized as homomeric and heteromeric trimers. Homotrimer. Forms heterotrimer with P2RX1. Expressed in a number of tissues, with highest levels detected in heart and kidney.

It localises to the cell membrane. It catalyses the reaction Na(+)(in) = Na(+)(out). It carries out the reaction Ca(2+)(in) = Ca(2+)(out). The enzyme catalyses chloride(in) = chloride(out). Its activity is regulated as follows. Activated by ATP. Slowly desensitizing. Not activated by ATP agonist alpha/beta-methylene-ATP. Highly sensitive to the antagonists suramin and PPADS. ATP-gated nonselective transmembrane cation channel permeable to potassium, sodium and calcium. Unlike other P2RX receptors, the P2X5 receptor is also permeable to chloride. Acts as an important regulator of inflammatory-related bone loss and osteoclast multinucleation. This is P2X purinoceptor 5 from Mus musculus (Mouse).